We begin with the raw amino-acid sequence, 270 residues long: Photosystem I chlorophyll a/b-binding protein 6, chloroplastic (270 aa).

The transit peptide at methionine 1–threonine 33 directs the protein to the chloroplast. The interval serine 16 to threonine 36 is disordered. Polar residues predominate over residues arginine 19–threonine 36. Position 68 (tryptophan 68) interacts with chlorophyll b. Chlorophyll a is bound by residues phenylalanine 88 and glutamate 107. Arginine 112 contributes to the chlorophyll b binding site. The chain crosses the membrane as a helical span at residues tyrosine 146–alanine 164. The chlorophyll b site is built by glutamate 165 and arginine 168. The chlorophyll a site is built by lysine 221, glutamate 222, asparagine 225, arginine 227, glutamine 239, and histidine 254. A helical transmembrane segment spans residues leucine 228–serine 244.

The protein belongs to the light-harvesting chlorophyll a/b-binding (LHC) protein family. In terms of assembly, the LHC complex consists of chlorophyll a-b binding proteins. Homodimer. Binds pigments. Element of the NAD(P)H dehydrogenase-photosystem I supercomplex (NDH-PSI). The cofactor is Binds at least 14 chlorophylls (8 Chl-a and 6 Chl-b) and carotenoids such as lutein and neoxanthin.. Photoregulated by reversible phosphorylation of its threonine residues.

The protein localises to the plastid. It localises to the chloroplast thylakoid membrane. The light-harvesting complex (LHC) functions as a light receptor, it captures and delivers excitation energy to photosystems with which it is closely associated. Seems involved in the function of the photosystem I in low light conditions, when other LHCA proteins are less abundant. Required, together with LHCA5, for the formation of a full-size NAD(P)H dehydrogenase-photosystem I supercomplex (NDH-PSI) that triggers cyclic and chlororespiratory electron transport in chloroplast thylakoids, especially under stress conditions (e.g. increased light intensity). The sequence is that of Photosystem I chlorophyll a/b-binding protein 6, chloroplastic from Arabidopsis thaliana (Mouse-ear cress).